A 1738-amino-acid chain; its full sequence is Sodium leak channel NALCN (1738 aa).

Topologically, residues 1–36 (MLKRKQSSRVEAQPVTDFGPDESLSDNADILWINKP) are cytoplasmic. The helical transmembrane segment at 37–57 (WVHSLLRICAIISVISVCMNT) threads the bilayer. Topologically, residues 58-65 (PMTFEHYP) are extracellular. Residues 66–90 (PLQYVTFTLDTLLMFLYTAEMIAKM) traverse the membrane as a helical segment. At 91 to 106 (HIRGIVKGDSSYVKDR) the chain is on the cytoplasmic side. A helical transmembrane segment spans residues 107–129 (WCVFDGFMVFCLWVSLVLQVFEI). Topologically, residues 130 to 137 (ADIVDQMS) are extracellular. Residues 138–158 (PWGMLRIPRPLIMIRAFRIYF) traverse the membrane as a helical; Voltage-sensor segment. Over 159 to 173 (RFELPRTRITNILKR) the chain is Cytoplasmic. The chain crosses the membrane as a helical span at residues 174–199 (SGEQIWSVSIFLLFFLLLYGILGVQM). Residues 200 to 269 (FGTFTYHCVV…YSGFNEIGTS (70 aa)) are Extracellular-facing. Cystine bridges form between Cys207–Cys239 and Cys229–Cys245. Residues Asn210 and Asn216 are each glycosylated (N-linked (GlcNAc...) asparagine). Residues 270 to 289 (IFTVYEAASQEGWVFLMYRA) constitute an intramembrane region (pore-forming). At 290–294 (IDSFP) the chain is on the extracellular side. A helical transmembrane segment spans residues 295 to 322 (RWRSYFYFITLIFFLAWLVKNVFIAVII). Topologically, residues 323–382 (ETFAEIRVQFQQMWGSRSSTTSTATTQMFHEDAAGGWQLVAVDVNKPQGRAPACLQKMMR) are cytoplasmic. Residues 383-403 (SSVFHMFILSMVTVDVIVAAS) form a helical membrane-spanning segment. The Extracellular portion of the chain corresponds to 404–416 (NYYKGENFRRQYD). The chain crosses the membrane as a helical span at residues 417–439 (EFYLAEVAFTVLFDLEALLKIWC). At 440–447 (LGFTGYIS) the chain is on the cytoplasmic side. Residues 448–468 (SSLHKFELLLVIGTTLHVYPD) form a helical membrane-spanning segment. Over 469 to 472 (LYHS) the chain is Extracellular. Residues 473–492 (QFTYFQVLRVVRLIKISPAL) traverse the membrane as a helical; Voltage-sensor segment. The Cytoplasmic portion of the chain corresponds to 493–502 (EDFVYKIFGP). A helical transmembrane segment spans residues 503 to 530 (GKKLGSLVVFTASLLIVMSAISLQMFCF). At 531–543 (VEELDRFTTFPRA) the chain is on the extracellular side. Positions 544 to 563 (FMSMFQILTQEGWVDVMDQT) form an intramembrane region, pore-forming. At 564 to 569 (LNAVGH) the chain is on the extracellular side. The helical transmembrane segment at 570-599 (MWAPVVAIYFILYHLFATLILLSLFVAVIL) threads the bilayer. At 600-886 (DNLELDEDLK…QLYDLLGLVT (287 aa)) the chain is on the cytoplasmic side. Positions 762–785 (QERRSLRHGSNSQRISRGKSLETL) are disordered. A coiled-coil region spans residues 795–830 (YRNAQREDSEIKMIQEKKEQAEMKRKVQEEELRENH). A helical membrane pass occupies residues 887–906 (YLDWVMIIVTICSCISMMFE). Topologically, residues 907–915 (SPFRRVMHA) are extracellular. Residues 916–939 (PTLQIAEYVFVIFMSIELNLKIMA) form a helical membrane-spanning segment. At 940-947 (DGLFFTPT) the chain is on the cytoplasmic side. A helical transmembrane segment spans residues 948–972 (AVIRDFGGVMDIFIYLVSLIFLCWM). The Extracellular portion of the chain corresponds to 973 to 980 (PQNVPAES). The helical; Voltage-sensor transmembrane segment at 981–1003 (GAQLLMVLRCLRPLRIFKLVPQM) threads the bilayer. At 1004–1015 (RKVVRELFSGFK) the chain is on the cytoplasmic side. Residues 1016-1039 (EIFLVSILLLTLMLVFASFGVQLF) traverse the membrane as a helical segment. The Extracellular segment spans residues 1040-1104 (AGKLAKCNDP…NFNFDNVGNA (65 aa)). Cys1046 and Cys1057 are oxidised to a cystine. A glycan (N-linked (GlcNAc...) asparagine) is linked at Asn1064. Residues 1105–1124 (MLALFEVLSLKGWVEVRDVI) constitute an intramembrane region (pore-forming). The Extracellular segment spans residues 1125–1129 (IHRVG). Residues 1130-1159 (PIHGIYIHVFVFLGCMIGLTLFVGVVIANF) traverse the membrane as a helical segment. At 1160–1210 (NENKGTALLTVDQRRWEDLKSRLKIAQPLHLPPRPDNDGFRAKMYDITQHP) the chain is on the cytoplasmic side. The helical transmembrane segment at 1211–1227 (FFKRTIALLVLAQSVLL) threads the bilayer. Over 1228-1236 (SVKWDVEDP) the chain is Extracellular. A helical membrane pass occupies residues 1237-1260 (VTVPLATMSVVFTFIFVLEVTMKI). The Cytoplasmic portion of the chain corresponds to 1261–1271 (IAMSPAGFWQS). The helical transmembrane segment at 1272–1293 (RRNRYDLLVTSLGVVWVVLHFA) threads the bilayer. At 1294-1296 (LLN) the chain is on the extracellular side. A helical; Voltage-sensor membrane pass occupies residues 1297–1318 (AYTYMMGACVIVFRFFSICGKH). The Cytoplasmic portion of the chain corresponds to 1319 to 1331 (VTLKMLLLTVVVS). A helical transmembrane segment spans residues 1332 to 1357 (MYKSFFIIVGMFLLLLCYAFAGVVLF). At 1358 to 1378 (GTVKYGENINRHANFSSAGKA) the chain is on the extracellular side. An intramembrane region (pore-forming) is located at residues 1379-1398 (ITVLFRIVTGEDWNKIMHDC). The Extracellular segment spans residues 1399–1420 (MVQPPFCTPDEFTYWATDCGNY). A disulfide bridge links Cys1405 with Cys1417. The helical transmembrane segment at 1421–1447 (AGALMYFCSFYVIIAYIMLNLLVAIIV) threads the bilayer. The Cytoplasmic portion of the chain corresponds to 1448 to 1738 (ENFSLFYSTE…DESGDDLLDI (291 aa)). Residues 1611-1678 (PPSIETTQPS…QWRLPSAPKP (68 aa)) are disordered. Residues 1613 to 1632 (SIETTQPSEDTNANSQDNSM) are compositionally biased toward polar residues. Over residues 1633 to 1648 (QPETSSQQQLLSPTLS) the composition is skewed to low complexity.

Belongs to the NALCN family. Found in a complex with NALCN, UNC79, UNC80 and NACL1; these auxiliary subunits are indispensable for the function of NALCN channel. Interacts with UNC80; required for the NALCN activation/inhibition by GPCRs in neurons. Found in a complex with NALCN, UNC79 and UNC80; UNC80 bridges NALCN to UNC79. Interacts with CHRM3. Post-translationally, phosphorylated on tyrosine residues.

It is found in the cell membrane. The enzyme catalyses Na(+)(in) = Na(+)(out). With respect to regulation, inhibited by low micromolar concentrations of Gd(3+) and high micromolar concentrations of verapamil. Insensitive to tetrodotoxin (TTX) and potentiated by low external Ca(2+) concentration. Its function is as follows. Voltage-gated ion channel responsible for the resting Na(+) permeability that controls neuronal excitability. NALCN channel functions as a multi-protein complex, which consists at least of NALCN, NALF1, UNC79 and UNC80. NALCN is the voltage-sensing, pore-forming subunit of the NALCN channel complex. NALCN channel complex is constitutively active and conducts monovalent cations but is blocked by physiological concentrations of extracellular divalent cations. In addition to its role in regulating neuronal excitability, is required for normal respiratory rhythm, systemic osmoregulation by controlling the serum sodium concentration and in the regulation of the intestinal pace-making activity in the interstitial cells of Cajal. NALCN channel is also activated by neuropeptides such as neurotensin and substance P (SP) through a SRC family kinases-dependent pathway. In addition, NALCN activity is enhanced/modulated by several GPCRs, such as CHRM3. The polypeptide is Sodium leak channel NALCN (Homo sapiens (Human)).